Consider the following 297-residue polypeptide: Probable endonuclease 4 (297 aa).

Zn(2+) is bound by residues His68, His109, Glu144, Asp178, His181, His213, Asp226, His228, and Glu258.

Belongs to the AP endonuclease 2 family. Zn(2+) serves as cofactor.

It carries out the reaction Endonucleolytic cleavage to 5'-phosphooligonucleotide end-products.. Its function is as follows. Endonuclease IV plays a role in DNA repair. It cleaves phosphodiester bonds at apurinic or apyrimidinic (AP) sites, generating a 3'-hydroxyl group and a 5'-terminal sugar phosphate. In Enterococcus faecalis (strain ATCC 700802 / V583), this protein is Probable endonuclease 4.